The following is a 1269-amino-acid chain: Phospholipase D A (1269 aa).

Polar residues predominate over residues 55-64 (YTSVGSAPTT). The disordered stretch occupies residues 55–121 (YTSVGSAPTT…NNNLQSPTQS (67 aa)). Low complexity-rich tracts occupy residues 65–87 (NNNS…SGSS) and 95–114 (NSNK…NNNN). The stretch at 131–192 (SKALHDFEEK…ELKSLDELLH (62 aa)) forms a coiled coil. Residues 222 to 232 (NSVTNNTPSSA) show a composition bias toward polar residues. Disordered regions lie at residues 222–269 (NSVT…SSST) and 300–320 (NSYP…DPNL). The segment covering 233-269 (TPLTLSNNNNYTSSSLATSPTTNSSSSSSSSSSSSST) has biased composition (low complexity). 2 consecutive PLD phosphodiesterase domains span residues 435–462 (IYWS…CFGR) and 704–731 (EQIY…NDRS). Residues His440, Lys442, Asp447, His709, Lys711, and Asp716 contribute to the active site. Residues 803 to 835 (NNNNNSNINNNINNNNNEINNNNNNNNNNNSNE) are a coiled coil. Composition is skewed to low complexity over residues 810-850 (INNN…NSNS), 859-906 (NLPP…GTTN), and 934-943 (SSPQDSPQDS). Disordered regions lie at residues 810–966 (INNN…HQSP) and 983–1007 (SNEQ…TTTD). The span at 987 to 1003 (LPPPPSSTTPPPPPPPL) shows a compositional bias: pro residues. A coiled-coil region spans residues 1059–1096 (TTAQQQQQQQQQQQQQQQQQQQQQQQQQQQQQQQQQQQ). Residues 1116-1167 (IKKKRSSISPSTSSNKLLLSGNGSGDSIRVVTDSGSSPRGQPRSMSSLHDHA) are disordered. Positions 1122–1142 (SISPSTSSNKLLLSGNGSGDS) are enriched in low complexity. Over residues 1148–1162 (DSGSSPRGQPRSMSS) the composition is skewed to polar residues.

This sequence belongs to the phospholipase D family.

It carries out the reaction a 1,2-diacyl-sn-glycero-3-phosphocholine + H2O = a 1,2-diacyl-sn-glycero-3-phosphate + choline + H(+). Inhibited by butan-1-ol. Its function is as follows. Plays a role in cell growth. Hydrolyzes membrane phospholipids, such as PtdCho free headgroup and PtdOH (phosphatidic acid; signaling molecule on its own). Involved in the inhibition of actin-based motility and endocytosis. Its inhibition causes complete collapse of F-actin organization. In Dictyostelium discoideum (Social amoeba), this protein is Phospholipase D A (pldA).